The chain runs to 193 residues: MRLCDRDIEAWLDEGRLSITPRPPVERINGVTVDVRLGNKFRTFSGHTAAYIDLSGPKDEVSAALDRVMSDEIVLAEGEAFYLHPGELALAVTFESVTLPADLVGWLDGRSSLARLGLMVHVTAHRIDPGWSGHIVLEFFNAGKLPLALRPGMMIGALSFEPLTGPADRPYNRRQDAKYRDQQGAVASRIDKD.

Residues 110–115 (RSSLAR), Asp128, 136–138 (VLE), Tyr171, Lys178, and Gln182 contribute to the dCTP site. Glu138 serves as the catalytic Proton donor/acceptor. The span at 170-181 (PYNRRQDAKYRD) shows a compositional bias: basic and acidic residues. A disordered region spans residues 170-193 (PYNRRQDAKYRDQQGAVASRIDKD).

The protein belongs to the dCTP deaminase family. Homotrimer.

The enzyme catalyses dCTP + H2O + H(+) = dUTP + NH4(+). It participates in pyrimidine metabolism; dUMP biosynthesis; dUMP from dCTP (dUTP route): step 1/2. Functionally, catalyzes the deamination of dCTP to dUTP. This is dCTP deaminase from Enterobacter sp. (strain 638).